A 114-amino-acid polypeptide reads, in one-letter code: NADH-ubiquinone oxidoreductase chain 3 (114 aa).

3 helical membrane passes run 3–23 (ATILMIAMTLSTILAILSFWL), 54–74 (FFLIAILFLLFDLEIALLLPF), and 85–105 (IVILWAALILTLLTLGLIYEW).

This sequence belongs to the complex I subunit 3 family.

Its subcellular location is the mitochondrion membrane. The enzyme catalyses a ubiquinone + NADH + 5 H(+)(in) = a ubiquinol + NAD(+) + 4 H(+)(out). Core subunit of the mitochondrial membrane respiratory chain NADH dehydrogenase (Complex I) that is believed to belong to the minimal assembly required for catalysis. Complex I functions in the transfer of electrons from NADH to the respiratory chain. The immediate electron acceptor for the enzyme is believed to be ubiquinone. This Xenopus laevis (African clawed frog) protein is NADH-ubiquinone oxidoreductase chain 3 (mt-nd3).